Reading from the N-terminus, the 363-residue chain is UDP-3-O-acylglucosamine N-acyltransferase (363 aa).

The active-site Proton acceptor is His-237. A disordered region spans residues Glu-338–Ser-363.

It belongs to the transferase hexapeptide repeat family. LpxD subfamily. Homotrimer.

It catalyses the reaction a UDP-3-O-[(3R)-3-hydroxyacyl]-alpha-D-glucosamine + a (3R)-hydroxyacyl-[ACP] = a UDP-2-N,3-O-bis[(3R)-3-hydroxyacyl]-alpha-D-glucosamine + holo-[ACP] + H(+). The protein operates within bacterial outer membrane biogenesis; LPS lipid A biosynthesis. Functionally, catalyzes the N-acylation of UDP-3-O-acylglucosamine using 3-hydroxyacyl-ACP as the acyl donor. Is involved in the biosynthesis of lipid A, a phosphorylated glycolipid that anchors the lipopolysaccharide to the outer membrane of the cell. This is UDP-3-O-acylglucosamine N-acyltransferase from Synechococcus sp. (strain JA-2-3B'a(2-13)) (Cyanobacteria bacterium Yellowstone B-Prime).